Here is a 115-residue protein sequence, read N- to C-terminus: Meiotically up-regulated gene 106 protein (115 aa).

The first 34 residues, 1-34 (MSIKVEWIKFTRLKKCATLLVQLSLLRYRYMVLA), serve as a signal peptide directing secretion. 2 helical membrane passes run 41–60 (CIVV…GALF) and 81–103 (GVKL…FTPY).

Its subcellular location is the membrane. Functionally, has a role in meiosis. The chain is Meiotically up-regulated gene 106 protein (mug106) from Schizosaccharomyces pombe (strain 972 / ATCC 24843) (Fission yeast).